The following is a 308-amino-acid chain: Acetyl-coenzyme A carboxylase carboxyl transferase subunit beta (308 aa).

The region spanning 26 to 295 (LWIKDPETGE…EQKPLEPEIL (270 aa)) is the CoA carboxyltransferase N-terminal domain.

This sequence belongs to the AccD/PCCB family. In terms of assembly, acetyl-CoA carboxylase is a heterohexamer composed of biotin carboxyl carrier protein (AccB), biotin carboxylase (AccC) and two subunits each of ACCase subunit alpha (AccA) and ACCase subunit beta (AccD).

Its subcellular location is the cytoplasm. It carries out the reaction N(6)-carboxybiotinyl-L-lysyl-[protein] + acetyl-CoA = N(6)-biotinyl-L-lysyl-[protein] + malonyl-CoA. It participates in lipid metabolism; malonyl-CoA biosynthesis; malonyl-CoA from acetyl-CoA: step 1/1. In terms of biological role, component of the acetyl coenzyme A carboxylase (ACC) complex. Biotin carboxylase (BC) catalyzes the carboxylation of biotin on its carrier protein (BCCP) and then the CO(2) group is transferred by the transcarboxylase to acetyl-CoA to form malonyl-CoA. The chain is Acetyl-coenzyme A carboxylase carboxyl transferase subunit beta from Mesorhizobium japonicum (strain LMG 29417 / CECT 9101 / MAFF 303099) (Mesorhizobium loti (strain MAFF 303099)).